A 546-amino-acid polypeptide reads, in one-letter code: CTP synthase (546 aa).

The interval 1-266 (MTTNYIFVTG…DDLVCARFGI (266 aa)) is amidoligase domain. Ser14 lines the CTP pocket. Ser14 serves as a coordination point for UTP. ATP contacts are provided by residues 15–20 (SLGKGI) and Asp72. Asp72 and Glu140 together coordinate Mg(2+). CTP-binding positions include 147 to 149 (DIE), 187 to 192 (KTKPTQ), and Lys223. UTP is bound by residues 187-192 (KTKPTQ) and Lys223. 239–241 (KDV) is a binding site for ATP. A Glutamine amidotransferase type-1 domain is found at 291-542 (TIGMVGKYIE…VKAAGQNARG (252 aa)). Gly352 is an L-glutamine binding site. The active-site Nucleophile; for glutamine hydrolysis is the Cys379. Residues 380–383 (LGMQ), Glu403, and Arg470 each bind L-glutamine. Residues His515 and Glu517 contribute to the active site.

Belongs to the CTP synthase family. Homotetramer.

It catalyses the reaction UTP + L-glutamine + ATP + H2O = CTP + L-glutamate + ADP + phosphate + 2 H(+). It carries out the reaction L-glutamine + H2O = L-glutamate + NH4(+). The catalysed reaction is UTP + NH4(+) + ATP = CTP + ADP + phosphate + 2 H(+). It functions in the pathway pyrimidine metabolism; CTP biosynthesis via de novo pathway; CTP from UDP: step 2/2. With respect to regulation, allosterically activated by GTP, when glutamine is the substrate; GTP has no effect on the reaction when ammonia is the substrate. The allosteric effector GTP functions by stabilizing the protein conformation that binds the tetrahedral intermediate(s) formed during glutamine hydrolysis. Inhibited by the product CTP, via allosteric rather than competitive inhibition. In terms of biological role, catalyzes the ATP-dependent amination of UTP to CTP with either L-glutamine or ammonia as the source of nitrogen. Regulates intracellular CTP levels through interactions with the four ribonucleotide triphosphates. The chain is CTP synthase from Vibrio campbellii (strain ATCC BAA-1116).